A 149-amino-acid chain; its full sequence is Small ribosomal subunit protein uS13 (149 aa).

The protein belongs to the universal ribosomal protein uS13 family. Part of the 30S ribosomal subunit. Forms a loose heterodimer with protein S19. Forms two bridges to the 50S subunit in the 70S ribosome.

Located at the top of the head of the 30S subunit, it contacts several helices of the 16S rRNA. In the 70S ribosome it contacts the 23S rRNA (bridge B1a) and protein L5 of the 50S subunit (bridge B1b), connecting the 2 subunits; these bridges are implicated in subunit movement. In Methanococcus maripaludis (strain DSM 14266 / JCM 13030 / NBRC 101832 / S2 / LL), this protein is Small ribosomal subunit protein uS13.